A 72-amino-acid polypeptide reads, in one-letter code: UPF0154 protein EF_1734 (72 aa).

A helical transmembrane segment spans residues 4–26; sequence GWVVLIAVIALLVGAAGGFFLAR.

Belongs to the UPF0154 family.

The protein localises to the membrane. This Enterococcus faecalis (strain ATCC 700802 / V583) protein is UPF0154 protein EF_1734.